A 176-amino-acid chain; its full sequence is NAD(P)H-quinone oxidoreductase subunit 6, chloroplastic (176 aa).

Helical transmembrane passes span 10-30 (FLLV…VLFT), 32-52 (PIFS…LYIL), 61-81 (AQLL…VMFM), 95-115 (VGDG…ISTI), and 152-172 (FFLP…GAIS).

It belongs to the complex I subunit 6 family. In terms of assembly, NDH is composed of at least 16 different subunits, 5 of which are encoded in the nucleus.

The protein localises to the plastid. The protein resides in the chloroplast thylakoid membrane. The enzyme catalyses a plastoquinone + NADH + (n+1) H(+)(in) = a plastoquinol + NAD(+) + n H(+)(out). It catalyses the reaction a plastoquinone + NADPH + (n+1) H(+)(in) = a plastoquinol + NADP(+) + n H(+)(out). In terms of biological role, NDH shuttles electrons from NAD(P)H:plastoquinone, via FMN and iron-sulfur (Fe-S) centers, to quinones in the photosynthetic chain and possibly in a chloroplast respiratory chain. The immediate electron acceptor for the enzyme in this species is believed to be plastoquinone. Couples the redox reaction to proton translocation, and thus conserves the redox energy in a proton gradient. This chain is NAD(P)H-quinone oxidoreductase subunit 6, chloroplastic (ndhG), found in Aethionema grandiflorum (Persian stone-cress).